Consider the following 227-residue polypeptide: Cytochrome c oxidase subunit 2 (227 aa).

At 1–14 (MAYPFQLGLQDATS) the chain is on the mitochondrial intermembrane side. Residues 15-45 (PIMEELTNFHDHTLMIVFLISSLVLYLISLM) traverse the membrane as a helical segment. Residues 46 to 59 (LSTKLIHTSTMDAQ) are Mitochondrial matrix-facing. Residues 60-87 (EVETIWTILPAIILIMIALPSLRILYMM) form a helical membrane-spanning segment. Residues 88–227 (DEINNPALTV…LFENWSISMS (140 aa)) are Mitochondrial intermembrane-facing. Positions 161, 196, 198, 200, 204, and 207 each coordinate Cu cation. Mg(2+) is bound at residue Glu-198.

The protein belongs to the cytochrome c oxidase subunit 2 family. As to quaternary structure, component of the cytochrome c oxidase (complex IV, CIV), a multisubunit enzyme composed of 14 subunits. The complex is composed of a catalytic core of 3 subunits MT-CO1, MT-CO2 and MT-CO3, encoded in the mitochondrial DNA, and 11 supernumerary subunits COX4I, COX5A, COX5B, COX6A, COX6B, COX6C, COX7A, COX7B, COX7C, COX8 and NDUFA4, which are encoded in the nuclear genome. The complex exists as a monomer or a dimer and forms supercomplexes (SCs) in the inner mitochondrial membrane with NADH-ubiquinone oxidoreductase (complex I, CI) and ubiquinol-cytochrome c oxidoreductase (cytochrome b-c1 complex, complex III, CIII), resulting in different assemblies (supercomplex SCI(1)III(2)IV(1) and megacomplex MCI(2)III(2)IV(2)). Found in a complex with TMEM177, COA6, COX18, COX20, SCO1 and SCO2. Interacts with TMEM177 in a COX20-dependent manner. Interacts with COX20. Interacts with COX16. It depends on Cu cation as a cofactor.

It is found in the mitochondrion inner membrane. It carries out the reaction 4 Fe(II)-[cytochrome c] + O2 + 8 H(+)(in) = 4 Fe(III)-[cytochrome c] + 2 H2O + 4 H(+)(out). Functionally, component of the cytochrome c oxidase, the last enzyme in the mitochondrial electron transport chain which drives oxidative phosphorylation. The respiratory chain contains 3 multisubunit complexes succinate dehydrogenase (complex II, CII), ubiquinol-cytochrome c oxidoreductase (cytochrome b-c1 complex, complex III, CIII) and cytochrome c oxidase (complex IV, CIV), that cooperate to transfer electrons derived from NADH and succinate to molecular oxygen, creating an electrochemical gradient over the inner membrane that drives transmembrane transport and the ATP synthase. Cytochrome c oxidase is the component of the respiratory chain that catalyzes the reduction of oxygen to water. Electrons originating from reduced cytochrome c in the intermembrane space (IMS) are transferred via the dinuclear copper A center (CU(A)) of subunit 2 and heme A of subunit 1 to the active site in subunit 1, a binuclear center (BNC) formed by heme A3 and copper B (CU(B)). The BNC reduces molecular oxygen to 2 water molecules using 4 electrons from cytochrome c in the IMS and 4 protons from the mitochondrial matrix. The chain is Cytochrome c oxidase subunit 2 (MT-CO2) from Gerbilliscus robustus (Fringe-tailed gerbil).